The primary structure comprises 122 residues: Large ribosomal subunit protein uL14 (122 aa).

Belongs to the universal ribosomal protein uL14 family. In terms of assembly, part of the 50S ribosomal subunit. Forms a cluster with proteins L3 and L19. In the 70S ribosome, L14 and L19 interact and together make contacts with the 16S rRNA in bridges B5 and B8.

Binds to 23S rRNA. Forms part of two intersubunit bridges in the 70S ribosome. This chain is Large ribosomal subunit protein uL14, found in Alkalilimnicola ehrlichii (strain ATCC BAA-1101 / DSM 17681 / MLHE-1).